We begin with the raw amino-acid sequence, 426 residues long: Glutamate-1-semialdehyde 2,1-aminomutase (426 aa).

N6-(pyridoxal phosphate)lysine is present on Lys-265.

It belongs to the class-III pyridoxal-phosphate-dependent aminotransferase family. HemL subfamily. As to quaternary structure, homodimer. Requires pyridoxal 5'-phosphate as cofactor.

The protein localises to the cytoplasm. It carries out the reaction (S)-4-amino-5-oxopentanoate = 5-aminolevulinate. It functions in the pathway porphyrin-containing compound metabolism; protoporphyrin-IX biosynthesis; 5-aminolevulinate from L-glutamyl-tRNA(Glu): step 2/2. This is Glutamate-1-semialdehyde 2,1-aminomutase (hemL) from Salmonella typhimurium (strain SL1344).